A 752-amino-acid chain; its full sequence is Polyribonucleotide nucleotidyltransferase (752 aa).

2 residues coordinate Mg(2+): D519 and D525. In terms of domain architecture, KH spans 585-644; it reads PRVIAVKIPVDKIGEVIGPKGKMINQIQEDTGADISIEDDGTVYIGATNGPSADAARSAI. Positions 656 to 728 constitute an S1 motif domain; that stretch reads GERYLGTVVK…DRGKLSLSPV (73 aa). The tract at residues 727–752 is disordered; that stretch reads PVVAEEEGAEGAERAHATEPAEGAEI.

This sequence belongs to the polyribonucleotide nucleotidyltransferase family. The cofactor is Mg(2+).

The protein resides in the cytoplasm. It catalyses the reaction RNA(n+1) + phosphate = RNA(n) + a ribonucleoside 5'-diphosphate. Involved in mRNA degradation. Catalyzes the phosphorolysis of single-stranded polyribonucleotides processively in the 3'- to 5'-direction. This chain is Polyribonucleotide nucleotidyltransferase, found in Pseudarthrobacter chlorophenolicus (strain ATCC 700700 / DSM 12829 / CIP 107037 / JCM 12360 / KCTC 9906 / NCIMB 13794 / A6) (Arthrobacter chlorophenolicus).